The following is a 147-amino-acid chain: Hemoglobin subunit gamma (147 aa).

One can recognise a Globin domain in the interval 3 to 147 (HFTEEDKATI…VASALSSRYH (145 aa)). The heme b site is built by His64 and His93.

The protein belongs to the globin family. As to quaternary structure, heterotetramer of two alpha chains and two gamma chains in fetal hemoglobin (Hb F). As to expression, red blood cells.

In terms of biological role, gamma chains make up the fetal hemoglobin F, in combination with alpha chains. The sequence is that of Hemoglobin subunit gamma (HBG) from Macaca fuscata fuscata (Japanese macaque).